A 115-amino-acid chain; its full sequence is Toxin-like structure LSTX-R1 (115 aa).

The signal sequence occupies residues 1–18 (MKLSLIIIATSLVIAVVA). A propeptide spanning residues 19-51 (FPSKDSAATDFDKTESLENVEERVETALDERPR) is cleaved from the precursor.

This sequence belongs to the neurotoxin 25 family. F7 subfamily. Contains 4 disulfide bonds. Expressed by the venom gland.

The protein localises to the secreted. The chain is Toxin-like structure LSTX-R1 from Lycosa singoriensis (Wolf spider).